Consider the following 962-residue polypeptide: Protease 3 (962 aa).

A signal peptide spans 1–23 (MPRSTWFKALLLLVALWGPAVQA). Residue histidine 88 participates in Zn(2+) binding. Residue glutamate 91 is the Proton acceptor of the active site. Residues histidine 92 and glutamate 169 each coordinate Zn(2+).

Belongs to the peptidase M16 family. In terms of assembly, monomer. It depends on Zn(2+) as a cofactor.

Its subcellular location is the periplasm. It catalyses the reaction Preferential cleavage of 16-Tyr-|-Leu-17 and 25-Phe-|-Tyr-26 bonds of oxidized insulin B chain. Also acts on other substrates of Mw less than 7 kDa such as insulin and glucagon.. Functionally, endopeptidase that degrades small peptides of less than 7 kDa, such as glucagon and insulin. This chain is Protease 3 (ptrA), found in Salmonella typhi.